The following is a 1477-amino-acid chain: Alpha-1-inhibitor 3 (1477 aa).

Residues 1–24 (MKKDREAQLCLFSALLAFLPFASL) form the signal peptide. A disulfide bond links cysteine 48 and cysteine 86. Residues asparagine 55 and asparagine 247 are each glycosylated (N-linked (GlcNAc...) asparagine). 2 disulfide bridges follow: cysteine 251–cysteine 295 and cysteine 269–cysteine 283. Asparagine 301, asparagine 321, asparagine 393, and asparagine 508 each carry an N-linked (GlcNAc...) asparagine glycan. 3 disulfide bridges follow: cysteine 468–cysteine 563, cysteine 595–cysteine 774, and cysteine 643–cysteine 678. Residues 601–750 (DQSVLLQKPE…TWIWDLVTVN (150 aa)) are bait region (approximate). 3 N-linked (GlcNAc...) asparagine glycosylation sites follow: asparagine 750, asparagine 777, and asparagine 872. 4 disulfides stabilise this stretch: cysteine 850/cysteine 886, cysteine 924/cysteine 1324, cysteine 1082/cysteine 1130, and cysteine 1355/cysteine 1470. The isoglutamyl cysteine thioester (Cys-Gln) cross-link spans 975-978 (CGEQ). Asparagine 994 carries N-linked (GlcNAc...) asparagine glycosylation. N-linked (GlcNAc...) asparagine glycosylation is found at asparagine 1143, asparagine 1314, and asparagine 1427.

This sequence belongs to the protease inhibitor I39 (alpha-2-macroglobulin) family. In terms of assembly, monomer.

The protein resides in the secreted. Protease inhibitor with a wide spectrum of protein targets, which attaches through its thioester function. The sequence is that of Alpha-1-inhibitor 3 (A1i3) from Rattus norvegicus (Rat).